A 371-amino-acid chain; its full sequence is Transcription termination/antitermination protein NusA (371 aa).

Residues 135-199 form the S1 motif domain; the sequence is EDIMTGIVQR…KGPQIYVSRT (65 aa). Positions 301 to 367 constitute a KH domain; it reads EKATTVIVPD…EPLFTEPETA (67 aa). The segment at 347-371 is disordered; that stretch reads GIYPRELEEDDEPLFTEPETAESDE. Positions 353 to 371 are enriched in acidic residues; that stretch reads LEEDDEPLFTEPETAESDE.

The protein belongs to the NusA family. In terms of assembly, monomer. Binds directly to the core enzyme of the DNA-dependent RNA polymerase and to nascent RNA.

The protein resides in the cytoplasm. Its function is as follows. Participates in both transcription termination and antitermination. This chain is Transcription termination/antitermination protein NusA, found in Bacillus subtilis (strain 168).